The sequence spans 426 residues: Homeobox protein knotted-1-like LET12 (426 aa).

3 disordered regions span residues 1–26, 85–158, and 270–290; these read MEFQ…QQNA, QTSN…ENSW, and GVAP…DQAD. A compositionally biased stretch (low complexity) spans 15 to 24; the sequence is QQQQQQQQQQ. Residues 104–114 show a composition bias toward gly residues; that stretch reads AGGGSNGGGSG. Over residues 139–151 the composition is skewed to low complexity; it reads ENNNNNNNNNNNN. One can recognise an ELK domain in the interval 327 to 347; it reads ELKHELKQGYKEKIVDIREEI. The segment at residues 348 to 411 is a DNA-binding region (homeobox; TALE-type); sequence LRKRRAGKLP…NQRKRNWHSN (64 aa). The tract at residues 406 to 426 is disordered; it reads RNWHSNPSTSSSQKSQTQECR. Positions 413 to 426 are enriched in low complexity; it reads STSSSQKSQTQECR.

Belongs to the TALE/KNOX homeobox family. As to expression, ubiquitously expressed in the mature plant.

It localises to the nucleus. Its function is as follows. May have a role to play in formative events in ovule and embryo morphogenesis. This Solanum lycopersicum (Tomato) protein is Homeobox protein knotted-1-like LET12 (LET12).